A 424-amino-acid chain; its full sequence is MMRKLAILSVSSFLFVEALFQEYQCYGSSSNTRVLNELNYDNAGTNLYNELEMNYYGKQENWYSLKKNSRSLGENDDGNNNNGDNNREGKDEDKRDGNNEDNETLRKPKHKKLKQPGDGNPDPNANPNVDPNANPNVDPNANPNVDPNANPNANPNANPNANPNANPNANPNANPNANPNANPNANPNANPNANPNANPNANPNANPNANPNANPNANPNANPNANPNANPNANPNANPNANPNANPNANPNANPNANPNANPNANPNANPNANPNANPNANPNANPNANPNANPNANPNKNNQGNGQGHNMPNDPNRNVDENANANNAVKNNNNEEPSDKHIEQYLKKIQNSLSTEWSPCSVTCGNGIQVRIKPGSANKPKDELDYENDIEKKICKMEKCSSVFNVVNSSIGLIMVLSFLFLN.

Residues Met1–Ala18 form the signal peptide. The segment at Ser69–Ser339 is disordered. Basic and acidic residues predominate over residues Asn85–Arg106. The required for the binding to heparan sulfate proteoglycans (HSPGs) on the surface of host hepatocytes stretch occupies residues Thr104–Lys111. The segment at Lys112 to Pro116 is region I; contains the proteolytic cleavage site. A compositionally biased stretch (low complexity) spans Asn120 to Asn300. Tandem repeats lie at residues Pro123–Asn126, Pro127–Asp130, Pro131–Asn134, Pro135–Asp138, Pro139–Asn142, Pro143–Asp146, Pro147–Asn150, Pro151–Asn154, Pro155–Asn158, Pro159–Asn162, Pro163–Asn166, Pro167–Asn170, Pro171–Asn174, Pro175–Asn178, Pro179–Asn182, Pro183–Asn186, Pro187–Asn190, Pro191–Asn194, Pro195–Asn198, Pro199–Asn202, Pro203–Asn206, Pro207–Asn210, Pro211–Asn214, Pro215–Asn218, Pro219–Asn222, Pro223–Asn226, Pro227–Asn230, Pro231–Asn234, Pro235–Asn238, Pro239–Asn242, Pro243–Asn246, Pro247–Asn250, Pro251–Asn254, Pro255–Asn258, Pro259–Asn262, Pro263–Asn266, Pro267–Asn270, Pro271–Asn274, Pro275–Asn278, Pro279–Asn282, Pro283–Asn286, Pro287–Asn290, Pro291–Asn294, and Pro295–Asn298. The 44 X 4 AA tandem repeats of P-N-[AV]-[ND] stretch occupies residues Pro123–Asn298. The segment covering Lys301–Pro316 has biased composition (polar residues). Residues Glu322–Glu336 show a composition bias toward low complexity. The 54-residue stretch at Lys349–Ser402 folds into the TSP type-1 domain. 2 cysteine pairs are disulfide-bonded: Cys361–Cys396 and Cys365–Cys401. Thr364 carries an O-linked (Fuc) threonine glycan. Residue Cys401 is the site of GPI-anchor amidated cysteine attachment. Positions Ser402–Asn424 are cleaved as a propeptide — removed in mature form.

The protein belongs to the plasmodium circumsporozoite protein family. In terms of processing, during host cell invasion, proteolytically cleaved at the cell membrane in the region I by a papain-like cysteine protease of parasite origin. Cleavage is triggered by the sporozoite contact with highly sulfated heparan sulfate proteoglycans (HSPGs) present on the host hepatocyte cell surface. Cleavage exposes the TSP type-1 (TSR) domain and is required for productive invasion of host hepatocytes but not for adhesion to the host cell membrane. Cleavage is dispensable for sporozoite development in the oocyst, motility and for traversal of host and vector cells. O-glycosylated; maybe by POFUT2.

It localises to the cell membrane. It is found in the cytoplasm. In terms of biological role, essential sporozoite protein. In the mosquito vector, required for sporozoite development in the oocyst, migration through the vector hemolymph and entry into the vector salivary glands. In the vertebrate host, required for sporozoite migration through the host dermis and infection of host hepatocytes. Binds to highly sulfated heparan sulfate proteoglycans (HSPGs) on the surface of host hepatocytes. Its function is as follows. In the vertebrate host, binds to highly sulfated heparan sulfate proteoglycans (HSPGs) on the surface of host hepatocytes and is required for sporozoite invasion of the host hepatocytes. The protein is Circumsporozoite protein of Plasmodium falciparum (isolate t4 / Thailand).